The following is a 144-amino-acid chain: EF-hand calcium-binding domain-containing protein 8 (144 aa).

2 consecutive EF-hand domains span residues 52-86 and 87-122; these read IHLA…VLSS and VSDE…EFQG.

The polypeptide is EF-hand calcium-binding domain-containing protein 8 (EFCAB8) (Homo sapiens (Human)).